Consider the following 211-residue polypeptide: Large ribosomal subunit protein uL3 (211 aa).

The tract at residues 135 to 155 (THGNSLSHRAPGSIGQNQSPG) is disordered. Q152 is modified (N5-methylglutamine).

Belongs to the universal ribosomal protein uL3 family. As to quaternary structure, part of the 50S ribosomal subunit. Forms a cluster with proteins L14 and L19. In terms of processing, methylated by PrmB.

Functionally, one of the primary rRNA binding proteins, it binds directly near the 3'-end of the 23S rRNA, where it nucleates assembly of the 50S subunit. In Pseudoalteromonas translucida (strain TAC 125), this protein is Large ribosomal subunit protein uL3.